A 241-amino-acid chain; its full sequence is Cysteine-rich secretory protein 3 (241 aa).

The N-terminal stretch at 1-19 (MALMLVLFFLAAVLPPSLL) is a signal peptide. Residues 44 to 170 (SKHNQLRRKV…PLRYFYVCRY (127 aa)) form the SCP domain. N118, N132, and N175 each carry an N-linked (GlcNAc...) asparagine glycan. Intrachain disulfides connect C194-C201, C197-C206, C210-C241, C219-C235, and C226-C239. The ShKT domain maps to 210–241 (CQYKDMSFWCKRLEYVCKHPGLKKRCLATCQC).

The protein belongs to the CRISP family. In terms of assembly, interacts with A1BG. Interacts with KNG1 isoform LMW. As to expression, expressed in submandibular gland.

It is found in the cytoplasmic vesicle. It localises to the secretory vesicle. This protein is supposed to help spermatozoa undergo functional maturation while they move from the testis to the ductus deferens. The protein is Cysteine-rich secretory protein 3 (Crisp3) of Mus musculus (Mouse).